A 42-amino-acid chain; its full sequence is Photosystem I reaction center subunit IX (42 aa).

A helical membrane pass occupies residues 7-27; sequence YLSTAPVIATIWFGFLAGLLI.

Belongs to the PsaJ family.

The protein localises to the plastid. The protein resides in the chloroplast thylakoid membrane. May help in the organization of the PsaE and PsaF subunits. The chain is Photosystem I reaction center subunit IX from Chaetosphaeridium globosum (Charophycean green alga).